A 175-amino-acid chain; its full sequence is Sec-independent protein translocase protein TatB (175 aa).

The helical transmembrane segment at Met1–Gly21 threads the bilayer. Disordered stretches follow at residues Gly104–Trp132 and Ser155–Phe175.

Belongs to the TatB family. In terms of assembly, the Tat system comprises two distinct complexes: a TatABC complex, containing multiple copies of TatA, TatB and TatC subunits, and a separate TatA complex, containing only TatA subunits. Substrates initially bind to the TatABC complex, which probably triggers association of the separate TatA complex to form the active translocon.

Its subcellular location is the cell inner membrane. Functionally, part of the twin-arginine translocation (Tat) system that transports large folded proteins containing a characteristic twin-arginine motif in their signal peptide across membranes. Together with TatC, TatB is part of a receptor directly interacting with Tat signal peptides. TatB may form an oligomeric binding site that transiently accommodates folded Tat precursor proteins before their translocation. This is Sec-independent protein translocase protein TatB from Paraburkholderia xenovorans (strain LB400).